The following is a 602-amino-acid chain: Peptide-N(4)-(N-acetyl-beta-glucosaminyl)asparagine amidase (602 aa).

The Thioredoxin domain maps to 2–130; sequence PVREVSRLPE…EKKFLERFVG (129 aa). 4 residues coordinate Zn(2+): cysteine 189, cysteine 192, cysteine 222, and cysteine 225. Cysteine 248 functions as the Nucleophile in the catalytic mechanism. Catalysis depends on residues histidine 275 and aspartate 292. One can recognise a PAW domain in the interval 400–602; the sequence is DMGGRTTGSK…ESMVVRVYMK (203 aa).

Belongs to the transglutaminase-like superfamily. PNGase family. Zn(2+) serves as cofactor.

The protein resides in the cytoplasm. It is found in the endoplasmic reticulum. The enzyme catalyses Hydrolysis of an N(4)-(acetyl-beta-D-glucosaminyl)asparagine residue in which the glucosamine residue may be further glycosylated, to yield a (substituted) N-acetyl-beta-D-glucosaminylamine and a peptide containing an aspartate residue.. Its function is as follows. Specifically deglycosylates the denatured form of N-linked glycoproteins in the cytoplasm and assists their proteasome-mediated degradation. Cleaves the beta-aspartyl-glucosamine (GlcNAc) of the glycan and the amide side chain of Asn, converting Asn to Asp. Prefers proteins containing high-mannose over those bearing complex type oligosaccharides. Can recognize misfolded proteins in the endoplasmic reticulum that are exported to the cytosol to be destroyed and deglycosylate them, while it has no activity toward native proteins. Deglycosylation is a prerequisite for subsequent proteasome-mediated degradation of some, but not all, misfolded glycoproteins. Also displays oxidoreductase (thioredoxin) activity. This Caenorhabditis briggsae protein is Peptide-N(4)-(N-acetyl-beta-glucosaminyl)asparagine amidase (png-1).